Consider the following 156-residue polypeptide: MPRRRVIGQRKILPDPKFKSELLAKFVNILMVDGKKSTAEKIVYTALDSMAEKSGKDHLAIFEEALENVRPAVEVKSRRVGGSTYQVPVEVRPVRRNALAMRWLVEAARKRGEKSMAQRLAAEMLDASENKGTAVKKREDVHRMADANKAFAHYRW.

This sequence belongs to the universal ribosomal protein uS7 family. In terms of assembly, part of the 30S ribosomal subunit. Contacts proteins S9 and S11.

Functionally, one of the primary rRNA binding proteins, it binds directly to 16S rRNA where it nucleates assembly of the head domain of the 30S subunit. Is located at the subunit interface close to the decoding center, probably blocks exit of the E-site tRNA. This chain is Small ribosomal subunit protein uS7, found in Vibrio campbellii (strain ATCC BAA-1116).